The chain runs to 398 residues: CCA-adding enzyme (398 aa).

ATP-binding residues include Gly32 and Arg35. The CTP site is built by Gly32 and Arg35. Positions 45 and 47 each coordinate Mg(2+). Arg116, Asp159, Arg162, Arg165, and Arg168 together coordinate ATP. Positions 116, 159, 162, 165, and 168 each coordinate CTP.

This sequence belongs to the tRNA nucleotidyltransferase/poly(A) polymerase family. Bacterial CCA-adding enzyme type 3 subfamily. In terms of assembly, homodimer. Mg(2+) is required as a cofactor.

It carries out the reaction a tRNA precursor + 2 CTP + ATP = a tRNA with a 3' CCA end + 3 diphosphate. The enzyme catalyses a tRNA with a 3' CCA end + 2 CTP + ATP = a tRNA with a 3' CCACCA end + 3 diphosphate. Its function is as follows. Catalyzes the addition and repair of the essential 3'-terminal CCA sequence in tRNAs without using a nucleic acid template. Adds these three nucleotides in the order of C, C, and A to the tRNA nucleotide-73, using CTP and ATP as substrates and producing inorganic pyrophosphate. tRNA 3'-terminal CCA addition is required both for tRNA processing and repair. Also involved in tRNA surveillance by mediating tandem CCA addition to generate a CCACCA at the 3' terminus of unstable tRNAs. While stable tRNAs receive only 3'-terminal CCA, unstable tRNAs are marked with CCACCA and rapidly degraded. In Lactobacillus gasseri (strain ATCC 33323 / DSM 20243 / BCRC 14619 / CIP 102991 / JCM 1131 / KCTC 3163 / NCIMB 11718 / NCTC 13722 / AM63), this protein is CCA-adding enzyme.